Consider the following 501-residue polypeptide: L-arabinose isomerase (501 aa).

Residues E306, E333, H350, and H450 each contribute to the Mn(2+) site.

The protein belongs to the arabinose isomerase family. In terms of assembly, homohexamer. It depends on Mn(2+) as a cofactor.

It catalyses the reaction beta-L-arabinopyranose = L-ribulose. The protein operates within carbohydrate degradation; L-arabinose degradation via L-ribulose; D-xylulose 5-phosphate from L-arabinose (bacterial route): step 1/3. Catalyzes the conversion of L-arabinose to L-ribulose. The protein is L-arabinose isomerase of Erwinia tasmaniensis (strain DSM 17950 / CFBP 7177 / CIP 109463 / NCPPB 4357 / Et1/99).